We begin with the raw amino-acid sequence, 239 residues long: Purine nucleoside phosphorylase DeoD-type (239 aa).

His-5 contacts a purine D-ribonucleoside. Phosphate-binding positions include Gly-21, Arg-25, Arg-44, and 88 to 91 (RVGS). A purine D-ribonucleoside is bound by residues 180–182 (EME) and 204–205 (SD). Residue Asp-205 is the Proton donor of the active site.

The protein belongs to the PNP/UDP phosphorylase family. As to quaternary structure, homohexamer; trimer of homodimers.

The enzyme catalyses a purine D-ribonucleoside + phosphate = a purine nucleobase + alpha-D-ribose 1-phosphate. It carries out the reaction a purine 2'-deoxy-D-ribonucleoside + phosphate = a purine nucleobase + 2-deoxy-alpha-D-ribose 1-phosphate. Functionally, catalyzes the reversible phosphorolytic breakdown of the N-glycosidic bond in the beta-(deoxy)ribonucleoside molecules, with the formation of the corresponding free purine bases and pentose-1-phosphate. The polypeptide is Purine nucleoside phosphorylase DeoD-type (Yersinia pseudotuberculosis serotype O:1b (strain IP 31758)).